The following is a 701-amino-acid chain: Triadin (701 aa).

The disordered stretch occupies residues 1–28 (MTEITAEGNASTTTTVIDSKNGSVPKSP). Topologically, residues 1-47 (MTEITAEGNASTTTTVIDSKNGSVPKSPGKVLKRTVTEDIVTTFSSP) are cytoplasmic. Positions 8–24 (GNASTTTTVIDSKNGSV) are enriched in polar residues. A helical membrane pass occupies residues 48-68 (AAWLLVIALIITWSAVAVVMF). The Lumenal segment spans residues 69–701 (DLVDYKNFSA…SSPGQKQQGQ (633 aa)). N-linked (GlcNAc...) asparagine glycosylation is present at Asn-75. The span at 117-130 (DGDEDDDDGDEDTD) shows a compositional bias: acidic residues. Disordered stretches follow at residues 117 to 256 (DGDE…KHEQ), 273 to 654 (GDLR…TKRQ), and 676 to 701 (FPVT…QQGQ). Composition is skewed to basic and acidic residues over residues 131–256 (KGEI…KHEQ), 303–351 (EGKE…KAPE), 365–385 (AKKD…EEHP), 391–426 (EKKE…KEET), 437–485 (GKKE…EVKP), and 492–643 (VKKE…KAKE). N-linked (GlcNAc...) asparagine glycosylation occurs at Asn-617. The segment covering 684–701 (PGESSGQPSSPGQKQQGQ) has biased composition (low complexity).

Homooligomer of variable subunit number; disulfide-linked. Interacts with CASQ1 and RYR1 in skeletal muscle. Interacts with CASQ2. Post-translationally, phosphorylated by CaMK2. In terms of processing, N-glycosylated. In terms of tissue distribution, detected in heart (at protein level). Skeletal and cardiac muscle.

It is found in the sarcoplasmic reticulum membrane. Contributes to the regulation of lumenal Ca2+ release via the sarcoplasmic reticulum calcium release channels RYR1 and RYR2, a key step in triggering skeletal and heart muscle contraction. Required for normal organization of the triad junction, where T-tubules and the sarcoplasmic reticulum terminal cisternae are in close contact. Required for normal skeletal muscle strength. Plays a role in excitation-contraction coupling in the heart and in regulating the rate of heart beats. The sequence is that of Triadin (TRDN) from Canis lupus familiaris (Dog).